We begin with the raw amino-acid sequence, 367 residues long: Peptide chain release factor 2 (367 aa).

Gln254 carries the post-translational modification N5-methylglutamine.

It belongs to the prokaryotic/mitochondrial release factor family. Methylated by PrmC. Methylation increases the termination efficiency of RF2.

It localises to the cytoplasm. Its function is as follows. Peptide chain release factor 2 directs the termination of translation in response to the peptide chain termination codons UGA and UAA. This Bordetella avium (strain 197N) protein is Peptide chain release factor 2.